We begin with the raw amino-acid sequence, 1002 residues long: Golgin subfamily A member 2 (1002 aa).

Over residues 1–11 (MWPQPRLPPRP) the composition is skewed to pro residues. The segment at 1–84 (MWPQPRLPPR…AATLQPSDDT (84 aa)) is interaction with p115/USO1. The tract at residues 1–107 (MWPQPRLPPR…TSMAASQNHD (107 aa)) is disordered. The stretch at 16–892 (ETRQSKLAAA…LELQELVLRL (877 aa)) forms a coiled coil. 3 positions are modified to dimethylated arginine: Arg-18, Arg-30, and Arg-35. Residues 26-49 (KKKLREYQQRNSPGVPTGAKKKKK) carry the Nuclear localization signal motif. Position 37 is a phosphoserine (Ser-37). Residues 52–63 (NGSNPETTTSGG) are compositionally biased toward polar residues. Ser-66 is modified (phosphoserine). Residues 95-105 (ASLTSMAASQN) are compositionally biased toward polar residues. Phosphoserine is present on residues Ser-273, Ser-438, and Ser-690. The tract at residues 694-724 (HPGEGDGLDREEEEDEEEEEEEAVAVPQPMP) is disordered. The span at 702–716 (DREEEEDEEEEEEEA) shows a compositional bias: acidic residues. Phosphoserine is present on residues Ser-937, Ser-953, and Ser-981. The segment at 992 to 1002 (DENDEVKITVI) is interaction with GORASP1/GRASP65.

Belongs to the GOLGA2 family. As to quaternary structure, homodimer, may assemble into homohexamers. Homotetramer; forms a parallel homotetramer with a flexible rod-like structure that can give rise to I- and Y-shaped conformations. Interacts with GORASP1/GRASP65. The homooligomer forms a complex with GORASP1 with a 1:1 stoichiometry. Interacts with RAB1B that has been activated by GTP-binding. Interacts with p115/USO1; interaction with p115/USO1 inhibits interaction with STX5 and/or RAB1B. Interacts with STX5. Interacts with ZFPL1. Interacts with AKAP450/AKAP9; leading to recruit AKAP450/AKAP9 to the cis-Golgi. Post-translationally, cleaved by caspases at the onset of apoptosis. Methylation by PRMT5 is required for Golgi ribbon formation. While dimethylation at Arg-30 and Arg-35 are confirmed in vivo, it is unclear whether Arg-18 is methylated in vivo. In terms of processing, phosphorylated at Ser-37 by CDK1 at the onset of mitosis, inhibiting the interaction with p115/USO1 and triggering Golgi disassembly. Phosphorylated at Ser-37 in prophase as the Golgi complex starts to break down, and remains phosphorylated during further breakdown and partitioning of the Golgi fragments in metaphase and anaphase. In telophase, GM130 is dephosphorylated by PP2A as the Golgi fragments start to reassemble.

The protein resides in the golgi apparatus. The protein localises to the cis-Golgi network membrane. It is found in the endoplasmic reticulum-Golgi intermediate compartment membrane. It localises to the cytoplasm. Its subcellular location is the cytoskeleton. The protein resides in the spindle pole. Functionally, peripheral membrane component of the cis-Golgi stack that acts as a membrane skeleton that maintains the structure of the Golgi apparatus, and as a vesicle thether that facilitates vesicle fusion to the Golgi membrane. Required for normal protein transport from the endoplasmic reticulum to the Golgi apparatus and the cell membrane. Together with p115/USO1 and STX5, involved in vesicle tethering and fusion at the cis-Golgi membrane to maintain the stacked and inter-connected structure of the Golgi apparatus. Plays a central role in mitotic Golgi disassembly: phosphorylation at Ser-37 by CDK1 at the onset of mitosis inhibits the interaction with p115/USO1, preventing tethering of COPI vesicles and thereby inhibiting transport through the Golgi apparatus during mitosis. Also plays a key role in spindle pole assembly and centrosome organization. Promotes the mitotic spindle pole assembly by activating the spindle assembly factor TPX2 to nucleate microtubules around the Golgi and capture them to couple mitotic membranes to the spindle: upon phosphorylation at the onset of mitosis, GOLGA2 interacts with importin-alpha via the nuclear localization signal region, leading to recruit importin-alpha to the Golgi membranes and liberate the spindle assembly factor TPX2 from importin-alpha. TPX2 then activates AURKA kinase and stimulates local microtubule nucleation. Upon filament assembly, nascent microtubules are further captured by GOLGA2, thus linking Golgi membranes to the spindle. Regulates the meiotic spindle pole assembly, probably via the same mechanism. Also regulates the centrosome organization. Also required for the Golgi ribbon formation and glycosylation of membrane and secretory proteins. In Homo sapiens (Human), this protein is Golgin subfamily A member 2 (GOLGA2).